Consider the following 130-residue polypeptide: Large ribosomal subunit protein bL12 (130 aa).

The protein belongs to the bacterial ribosomal protein bL12 family. As to quaternary structure, homodimer. Part of the ribosomal stalk of the 50S ribosomal subunit. Forms a multimeric L10(L12)X complex, where L10 forms an elongated spine to which 2 to 4 L12 dimers bind in a sequential fashion. Binds GTP-bound translation factors.

Functionally, forms part of the ribosomal stalk which helps the ribosome interact with GTP-bound translation factors. Is thus essential for accurate translation. The protein is Large ribosomal subunit protein bL12 of Mycobacterium leprae (strain TN).